Here is a 75-residue protein sequence, read N- to C-terminus: Conotoxin ar11a (75 aa).

The first 19 residues, 1–19 (MKLCATFLLVLVTLPLVTG), serve as a signal peptide directing secretion. Positions 20–36 (EKSSERSLSGAILRGVR) are excised as a propeptide. 4 disulfides stabilise this stretch: Cys39–Cys53, Cys46–Cys58, Cys52–Cys63, and Cys57–Cys70.

Expressed by the venom duct.

It is found in the secreted. In terms of biological role, both natural (L-Leu form) and synthetic (D-Leu from) peptides equally cause sensitivity to touch and body tremor. Neither L-Leu form nor D-Leu form is active on nerve-muscle preparation. The protein is Conotoxin ar11a of Conus arenatus (Sand-dusted cone).